The primary structure comprises 341 residues: GTPase Obg (341 aa).

One can recognise an Obg domain in the interval 1–159; the sequence is MKFLDQAKIY…RTIWLRLKLI (159 aa). Residues 160–327 enclose the OBG-type G domain; it reads ADAGLVGLPN…TLRQLARIID (168 aa). GTP-binding positions include 166 to 173, 191 to 195, 212 to 215, 279 to 282, and 308 to 310; these read GLPNAGKS, FTTLH, DIPG, SQVD, and SAV. The Mg(2+) site is built by serine 173 and threonine 193.

It belongs to the TRAFAC class OBG-HflX-like GTPase superfamily. OBG GTPase family. As to quaternary structure, monomer. Mg(2+) serves as cofactor.

It is found in the cytoplasm. Its function is as follows. An essential GTPase which binds GTP, GDP and possibly (p)ppGpp with moderate affinity, with high nucleotide exchange rates and a fairly low GTP hydrolysis rate. Plays a role in control of the cell cycle, stress response, ribosome biogenesis and in those bacteria that undergo differentiation, in morphogenesis control. The polypeptide is GTPase Obg (Brucella abortus biovar 1 (strain 9-941)).